The following is a 154-amino-acid chain: Endoribonuclease YbeY (154 aa).

The Zn(2+) site is built by His113, His117, and His123.

This sequence belongs to the endoribonuclease YbeY family. The cofactor is Zn(2+).

It localises to the cytoplasm. Single strand-specific metallo-endoribonuclease involved in late-stage 70S ribosome quality control and in maturation of the 3' terminus of the 16S rRNA. In Anaplasma marginale (strain Florida), this protein is Endoribonuclease YbeY.